The sequence spans 612 residues: Actin-binding LIM protein 2 (612 aa).

LIM zinc-binding domains lie at I22 to T81, T81 to G141, R151 to I210, and I210 to E270. Residues C83, C86, H103, C106, C109, C112, C131, and C134 each contribute to the Zn(2+) site. The Zn(2+) site is built by C212, C215, H232, C235, C238, C241, H260, and C263. The span at T269 to T278 shows a compositional bias: basic and acidic residues. Disordered regions lie at residues T269–P295 and A341–Y433. Over residues S279–P295 the composition is skewed to low complexity. S282, S294, G351, R356, S365, and S368 each carry phosphoserine. Residues S364–S373 show a composition bias toward low complexity. A compositionally biased stretch (polar residues) spans S394–Q416. Position 453 is a phosphoserine (S453). The segment at A471–R498 is disordered. Phosphothreonine is present on T473. Phosphoserine is present on residues S477 and S579. Residues S477–S489 show a composition bias toward low complexity. Residues T544–F612 enclose the HP domain.

In terms of assembly, interacts with F-actin and ABRA. As to expression, expressed in brain. Highly expressed in caudate/putamen, moderately expressed in the olfactory bulb. In the hippocampus, expressed in the CA1, CA2 and CA3 fields. In the cerebellum, expressed in Purkinje cells.

It localises to the cytoplasm. May act as scaffold protein. May stimulate ABRA activity and ABRA-dependent SRF transcriptional activity. The polypeptide is Actin-binding LIM protein 2 (Ablim2) (Mus musculus (Mouse)).